Reading from the N-terminus, the 230-residue chain is Ribonuclease 1 (230 aa).

A signal peptide spans 1–22 (MKILLASLCLISLLVILPSVFS). Glutamine 38 contributes to the RNA binding site. A disulfide bridge connects residues cysteine 44 and cysteine 50. Residues histidine 65, phenylalanine 115, 118–119 (HE), and 122–123 (KH) contribute to the RNA site. The active-site Proton donor is the histidine 65. Cystine bridges form between cysteine 80/cysteine 126, cysteine 186/cysteine 221, and cysteine 202/cysteine 213. Glutamate 119 is an active-site residue. Histidine 123 acts as the Proton acceptor in catalysis.

The protein belongs to the RNase T2 family.

The enzyme catalyses a ribonucleotidyl-ribonucleotide-RNA + H2O = a 3'-end 3'-phospho-ribonucleotide-RNA + a 5'-end dephospho-ribonucleoside-RNA + H(+). In terms of biological role, may remobilize phosphate, particularly when cells senesce or when phosphate becomes limiting. This Arabidopsis thaliana (Mouse-ear cress) protein is Ribonuclease 1 (RNS1).